A 339-amino-acid polypeptide reads, in one-letter code: MSEFTLKTRLLAALEGKPVDKVPVCSVTQTGIVELMDEVGAAWPEAHTNPELMAKLAIANYELSGLEAVRLPYCLTVLGEAMGCEINMGTKNRQPSVTASPYPKNLDGAAVPADLLQRNRIPAVLEAIKIVREKVGPDVPIIGGMEGPVTLASDLISVKSFMKWSIKKTDLFEQALDISTEAAIAYANAMVEAGADVIAIADPVASPDLMSPDTFRQFLQSRLQKFSASVNSVTVLHICGKVNAILSDMADCGFEGLSVEEKIGDAAEGKKVIGDRARLVGNISSPFTLLPGPIDKIKAEAKVALEGGIDVLAPGCGIAPMTPLENIKALVAARDEYYA.

Residues His-237, Cys-239, and Cys-316 each coordinate Zn(2+).

It belongs to the uroporphyrinogen decarboxylase family. MtbA/mtaA subfamily. Requires Zn(2+) as cofactor.

It catalyses the reaction methyl-Co(III)-[methanol-specific corrinoid protein] + coenzyme M = Co(I)-[methanol-specific corrinoid protein] + methyl-coenzyme M + H(+). Functionally, methyltransferase involved in methanogenesis in the methanol pathway. Catalyzes the transfer of the methyl group from the methylated corrinoid protein MtaC to coenzyme M, forming the substrate for coenzyme-B sulfoethylthiotransferase. MtaC can be substituted by free cob(I)alamin in vitro. This is Methylcobamide:CoM methyltransferase MtaA (mtaA) from Methanosarcina barkeri.